A 726-amino-acid polypeptide reads, in one-letter code: Sensory/regulatory protein RpfC (726 aa).

Residues 1 to 22 are Periplasmic-facing; the sequence is MKSPLPWLKRRLSGRADSEHAQ. A sensor region spans residues 1–22; sequence MKSPLPWLKRRLSGRADSEHAQ. The helical transmembrane segment at 23–40 threads the bilayer; sequence NLIRIIITTLFISYLGWR. Residues 41–51 are Cytoplasmic-facing; that stretch reads YQHTHGDTLMA. The helical transmembrane segment at 52–72 threads the bilayer; it reads TWLILVGELLVSLGLMVAILL. Over 73-94 the chain is Periplasmic; it reads RPQVSHTRRLIGMLLDYTCTGA. A helical membrane pass occupies residues 95–115; the sequence is IMAIQGEPASPLYAVCMWVTI. The Cytoplasmic portion of the chain corresponds to 116–127; it reads GNGLRYGSNYLR. The helical transmembrane segment at 128–148 threads the bilayer; the sequence is AATAMGSLCFLGAILISPYWK. Over 149 to 151 the chain is Periplasmic; sequence ANP. The helical transmembrane segment at 152 to 172 threads the bilayer; sequence YLSWGLLLGLIAVPLYFDSLL. At 173–726 the chain is on the cytoplasmic side; that stretch reads RAMTRAVREA…DGECSPRSNE (554 aa). Residues 195–417 form the Histidine kinase domain; the sequence is NMSHEFRTPL…VFWFELPMAI (223 aa). His198 carries the phosphohistidine; by autocatalysis modification. The 119-residue stretch at 463–581 folds into the Response regulatory domain; the sequence is RMLVADDHEA…KLLDTLADLA (119 aa). Asp512 carries the post-translational modification 4-aspartylphosphate. The HPt domain maps to 618–711; the sequence is GEEFERQFVR…KAGKDALDAR (94 aa). His657 bears the Phosphohistidine mark.

In terms of assembly, at low DSF concentrations, interacts with RpfF. Autophosphorylated. Activation may require a sequential transfer of a phosphate group from a His in the primary transmitter domain, to an Asp in the receiver domain and to a His in the secondary transmitter domain.

The protein localises to the cell inner membrane. The enzyme catalyses ATP + protein L-histidine = ADP + protein N-phospho-L-histidine.. Its activity is regulated as follows. Binding of DSF to the sensor region causes allosteric change, which facilitates RpfC autophosphorylation. Its function is as follows. Hybrid sensor kinase that regulates diverse biological functions through two distinct molecular mechanisms. At low cell density, the extracellular concentration of the diffusible signaling factor (DSF) is below a threshold, and unphosphorylated RpfC is involved in the negative regulation of DSF synthesis, via direct interaction with the DSF synthase RpfF. Interaction prevents synthesis of DSF, which remains at a basal level. This activity does not involve the phosphorelay mechanism and is not dependent on RpfG. Is also member of the two-component regulatory system RpfG/RpfC, which is involved in the perception and response to DSF, which is essential for cell-cell signaling. At high cell density, the level of extracellular DSF increases and binding of DSF to the sensor region of RpfC causes autophosphorylation of RpfC, which results in the release of RpfF and the activation of RpfG via a four-step phosphorelay. Activation of RpfG leads to the positive regulation of biofilm dispersal and the production of virulence factors. In Xanthomonas campestris pv. campestris (strain 8004), this protein is Sensory/regulatory protein RpfC (rpfC).